Reading from the N-terminus, the 121-residue chain is Putative iron-sulfur cluster insertion protein ErpA (121 aa).

Iron-sulfur cluster is bound by residues Cys49, Cys113, and Cys115.

This sequence belongs to the HesB/IscA family. In terms of assembly, homodimer. Iron-sulfur cluster serves as cofactor.

Its function is as follows. Required for insertion of 4Fe-4S clusters. The protein is Putative iron-sulfur cluster insertion protein ErpA of Methylibium petroleiphilum (strain ATCC BAA-1232 / LMG 22953 / PM1).